The sequence spans 531 residues: O-phosphoserine--tRNA(Cys) ligase (531 aa).

Substrate-binding positions include 189–191 (HMT), 234–236 (SAS), 276–277 (YY), and Asn-319.

The protein belongs to the class-II aminoacyl-tRNA synthetase family. O-phosphoseryl-tRNA(Cys) synthetase subfamily. As to quaternary structure, homotetramer. Interacts with SepCysS.

It catalyses the reaction tRNA(Cys) + O-phospho-L-serine + ATP = O-phospho-L-seryl-tRNA(Cys) + AMP + diphosphate. Functionally, catalyzes the attachment of O-phosphoserine (Sep) to tRNA(Cys). This chain is O-phosphoserine--tRNA(Cys) ligase, found in Methanospirillum hungatei JF-1 (strain ATCC 27890 / DSM 864 / NBRC 100397 / JF-1).